A 359-amino-acid chain; its full sequence is UDP-N-acetylglucosamine--N-acetylmuramyl-(pentapeptide) pyrophosphoryl-undecaprenol N-acetylglucosamine transferase (359 aa).

UDP-N-acetyl-alpha-D-glucosamine is bound by residues 15–17, asparagine 127, arginine 166, serine 191, isoleucine 245, 264–269, and glutamine 290; these read TGG and ALTVSE.

The protein belongs to the glycosyltransferase 28 family. MurG subfamily.

It is found in the cell inner membrane. The catalysed reaction is di-trans,octa-cis-undecaprenyl diphospho-N-acetyl-alpha-D-muramoyl-L-alanyl-D-glutamyl-meso-2,6-diaminopimeloyl-D-alanyl-D-alanine + UDP-N-acetyl-alpha-D-glucosamine = di-trans,octa-cis-undecaprenyl diphospho-[N-acetyl-alpha-D-glucosaminyl-(1-&gt;4)]-N-acetyl-alpha-D-muramoyl-L-alanyl-D-glutamyl-meso-2,6-diaminopimeloyl-D-alanyl-D-alanine + UDP + H(+). It participates in cell wall biogenesis; peptidoglycan biosynthesis. Its function is as follows. Cell wall formation. Catalyzes the transfer of a GlcNAc subunit on undecaprenyl-pyrophosphoryl-MurNAc-pentapeptide (lipid intermediate I) to form undecaprenyl-pyrophosphoryl-MurNAc-(pentapeptide)GlcNAc (lipid intermediate II). This chain is UDP-N-acetylglucosamine--N-acetylmuramyl-(pentapeptide) pyrophosphoryl-undecaprenol N-acetylglucosamine transferase, found in Pseudomonas putida (strain ATCC 47054 / DSM 6125 / CFBP 8728 / NCIMB 11950 / KT2440).